The chain runs to 147 residues: MKRKTLPLLALVATSLFLSACDDRSDDLKAISKFKDLTPPRFSDVVSRQDDVSEEWSQVGFSSGLTLQVLRTRESPDGCEGGSYYYLVDMEEKTVQPLMNALCIADNIKLEYHEVTDPYTKEKYFEYSHDGKLMGRLLIPSNPDNRE.

The N-terminal stretch at 1–20 is a signal peptide; that stretch reads MKRKTLPLLALVATSLFLSA. Residue Cys21 is the site of N-palmitoyl cysteine attachment. Cys21 is lipidated: S-diacylglycerol cysteine.

To E.coli YafY.

The protein resides in the cell inner membrane. Does not induce degP when overexpressed unless it is mutated to resemble YafY. The sequence is that of Lipoprotein YfjS (yfjS) from Escherichia coli (strain K12).